Consider the following 571-residue polypeptide: Double-stranded RNA-binding protein Staufen homolog 2 (571 aa).

The 68-residue stretch at 8 to 75 (TPMCLVNELA…ANKALTESTL (68 aa)) folds into the DRBM 1 domain. 2 positions are modified to phosphoserine: Pro9 and Val13. Arg18 bears the Phosphothreonine mark. Ser21 is modified (phosphoserine). Disordered regions lie at residues 71-94 (TEST…PGSI) and 178-203 (ALQN…DDKD). Polar residues predominate over residues 83–94 (PKSNVNNNPGSI). One can recognise a DRBM 2 domain in the interval 95 to 181 (TPTVELNGLA…AMKALQALQN (87 aa)). Ser188 carries the post-translational modification Phosphoserine. Residues 194–203 (SGKEMDDDKD) are compositionally biased toward basic and acidic residues. 2 consecutive DRBM domains span residues 207–274 (SEIS…ELKK) and 307–375 (NPIS…QLGY). Short sequence motifs (nuclear localization signal) lie at residues 273 to 317 (KKLP…QIQQ) and 373 to 412 (LGYK…PKGI). The interval 381-571 (LQDQLDKTGE…QDCKKSKSVI (191 aa)) is required for dendritic transport. Positions 382 to 413 (QDQLDKTGENKGWSGPKPGFPEPANNTPKGIL) are disordered. Phosphoserine occurs at positions 395, 416, 426, 440, 456, and 493. Positions 546–571 (LREKADNNQANPGSITQDCKKSKSVI) are disordered. The span at 552–562 (NNQANPGSITQ) shows a compositional bias: polar residues.

Identified in a mRNP complex, at least composed of DHX9, DDX3X, ELAVL1, HNRNPU, IGF2BP1, ILF3, PABPC1, PCBP2, PTBP2, STAU1, STAU2, SYNCRIP and YBX1. Interacts with the exportin XPO5. This requires RNA and RAN bound to GTP. Interacts with microtubules. Isoform 2 and isoform 3 may also interact with ribosomes, and this association is independent of translation. Interacts with TRIM71 (via NHL repeats) in an RNA-dependent manner. In terms of tissue distribution, expressed in both somata and dendrites of hippocampal neurons.

Its subcellular location is the nucleus. The protein localises to the nucleolus. The protein resides in the cytoplasm. It is found in the endoplasmic reticulum. In terms of biological role, RNA-binding protein required for the microtubule-dependent transport of neuronal RNA from the cell body to the dendrite. As protein synthesis occurs within the dendrite, the localization of specific mRNAs to dendrites may be a prerequisite for neurite outgrowth and plasticity at sites distant from the cell body. This is Double-stranded RNA-binding protein Staufen homolog 2 (Stau2) from Rattus norvegicus (Rat).